The sequence spans 214 residues: Adenylate kinase (214 aa).

Position 10–15 (10–15) interacts with ATP; sequence GAGKGT. Positions 30 to 59 are NMP; it reads STGDMLRAAIKAGTELGKQAKTLMDAGQLV. AMP is bound by residues T31, R36, 57 to 59, 85 to 88, and Q92; these read QLV and GFPR. The LID stretch occupies residues 122 to 159; the sequence is GRRVHPASGRSYHVVYNPPKVEGKDDVTGEDLIIRADD. ATP-binding positions include R123 and 132-133; that span reads SY. Residues R156 and R167 each contribute to the AMP site. Q200 provides a ligand contact to ATP.

It belongs to the adenylate kinase family. As to quaternary structure, monomer.

Its subcellular location is the cytoplasm. The enzyme catalyses AMP + ATP = 2 ADP. It participates in purine metabolism; AMP biosynthesis via salvage pathway; AMP from ADP: step 1/1. In terms of biological role, catalyzes the reversible transfer of the terminal phosphate group between ATP and AMP. Plays an important role in cellular energy homeostasis and in adenine nucleotide metabolism. The polypeptide is Adenylate kinase (Actinobacillus succinogenes (strain ATCC 55618 / DSM 22257 / CCUG 43843 / 130Z)).